The following is an 84-amino-acid chain: Small ribosomal subunit protein bS16 (84 aa).

The protein belongs to the bacterial ribosomal protein bS16 family.

This chain is Small ribosomal subunit protein bS16, found in Cupriavidus necator (strain ATCC 17699 / DSM 428 / KCTC 22496 / NCIMB 10442 / H16 / Stanier 337) (Ralstonia eutropha).